The sequence spans 144 residues: HTH-type transcriptional regulator MntR (144 aa).

In terms of domain architecture, HTH dtxR-type spans Met-1–Thr-63. Mn(2+) contacts are provided by Asp-8, Glu-11, His-77, Glu-99, Glu-102, and His-103.

The protein belongs to the DtxR/MntR family. As to quaternary structure, homodimer.

It is found in the cytoplasm. With respect to regulation, DNA binding is strongly activated by Mn(2+). Its function is as follows. Central regulator of manganese homeostasis. This chain is HTH-type transcriptional regulator MntR, found in Bacillus pumilus (strain SAFR-032).